The following is a 413-amino-acid chain: uncharacterized protein (413 aa).

The 128-residue stretch at 2-129 (RILIVDDENT…KTTWKLRLME (128 aa)) folds into the Response regulatory domain. D54 carries the post-translational modification 4-aspartylphosphate.

This is an uncharacterized protein from Sinorhizobium fredii (strain NBRC 101917 / NGR234).